The primary structure comprises 267 residues: Tryptophan synthase alpha chain (267 aa).

Catalysis depends on proton acceptor residues E49 and D60.

Belongs to the TrpA family. Tetramer of two alpha and two beta chains.

It carries out the reaction (1S,2R)-1-C-(indol-3-yl)glycerol 3-phosphate + L-serine = D-glyceraldehyde 3-phosphate + L-tryptophan + H2O. Its pathway is amino-acid biosynthesis; L-tryptophan biosynthesis; L-tryptophan from chorismate: step 5/5. Functionally, the alpha subunit is responsible for the aldol cleavage of indoleglycerol phosphate to indole and glyceraldehyde 3-phosphate. This chain is Tryptophan synthase alpha chain, found in Solibacter usitatus (strain Ellin6076).